The following is a 405-amino-acid chain: Coiled-coil domain-containing protein 91 (405 aa).

A GGA1-binding motif region spans residues 1 to 16 (MDDDDFGGFEAAETFD). Residues 1–27 (MDDDDFGGFEAAETFDGGNGETQTTSP) are disordered. 2 positions are modified to phosphoserine: Ser43 and Ser46. The stretch at 126–376 (GANVSNIQLR…QKRLDQVIRQ (251 aa)) forms a coiled coil. The homodimerization stretch occupies residues 210-377 (LSIIVDEYKH…KRLDQVIRQR (168 aa)).

As to quaternary structure, homodimer. Interacts with GGA1, GGA2 and AP1G1.

The protein localises to the membrane. It localises to the golgi apparatus. It is found in the trans-Golgi network membrane. Its subcellular location is the trans-Golgi network. Its function is as follows. Involved in the regulation of membrane traffic through the trans-Golgi network (TGN). Functions in close cooperation with the GGAs in the sorting of hydrolases to lysosomes. This Pongo abelii (Sumatran orangutan) protein is Coiled-coil domain-containing protein 91 (CCDC91).